The sequence spans 407 residues: Zinc finger protein 552 (407 aa).

A KRAB domain is found at 14 to 90 (VTFEDVAVKF…PMAGVSPKKA (77 aa)). The C2H2-type 1 zinc-finger motif lies at 91 to 113 (HPCEMCGPILGDILHVADHQGTH). A C2H2-type 2; degenerate zinc finger spans residues 119–141 (HRCEAWGNKLYDSGNFHQHQNEH). Glycyl lysine isopeptide (Lys-Gly) (interchain with G-Cter in SUMO2) cross-links involve residues Lys-176 and Lys-198. The segment at 212–234 (YSCGGCMKHFSTKDILSQHERLL) adopts a C2H2-type 3; degenerate zinc-finger fold. The segment at 244–262 (ECGKSSSKYDSFSNHQGVH) adopts a C2H2-type 4; degenerate zinc-finger fold. Glycyl lysine isopeptide (Lys-Gly) (interchain with G-Cter in SUMO2) cross-links involve residues Lys-251 and Lys-266. 5 C2H2-type zinc fingers span residues 268–290 (YTCGICGKLFNSKSHLLVHQRIH), 296–318 (YECEVCQKFFRHKYHLIAHQRVH), 324–346 (YECSDCGKSFTHSSTFRVHKRVH), 352–374 (YECSECGKSFAESSSLTKHRRVH), and 380–402 (YGCSECEKKFRQISSLRHHQRVH). Lys-308 participates in a covalent cross-link: Glycyl lysine isopeptide (Lys-Gly) (interchain with G-Cter in SUMO2).

The protein belongs to the krueppel C2H2-type zinc-finger protein family.

Its subcellular location is the nucleus. Functionally, may be involved in transcriptional regulation. The sequence is that of Zinc finger protein 552 (ZNF552) from Homo sapiens (Human).